Here is a 124-residue protein sequence, read N- to C-terminus: Small ribosomal subunit protein uS12 (124 aa).

D89 carries the 3-methylthioaspartic acid modification. A disordered region spans residues D103–E124.

It belongs to the universal ribosomal protein uS12 family. As to quaternary structure, part of the 30S ribosomal subunit. Contacts proteins S8 and S17. May interact with IF1 in the 30S initiation complex.

In terms of biological role, with S4 and S5 plays an important role in translational accuracy. Its function is as follows. Interacts with and stabilizes bases of the 16S rRNA that are involved in tRNA selection in the A site and with the mRNA backbone. Located at the interface of the 30S and 50S subunits, it traverses the body of the 30S subunit contacting proteins on the other side and probably holding the rRNA structure together. The combined cluster of proteins S8, S12 and S17 appears to hold together the shoulder and platform of the 30S subunit. The polypeptide is Small ribosomal subunit protein uS12 (Prochlorococcus marinus (strain NATL1A)).